The sequence spans 84 residues: Large ribosomal subunit protein bL31B (84 aa).

Belongs to the bacterial ribosomal protein bL31 family. Type B subfamily. As to quaternary structure, part of the 50S ribosomal subunit.

The protein is Large ribosomal subunit protein bL31B of Bacteroides thetaiotaomicron (strain ATCC 29148 / DSM 2079 / JCM 5827 / CCUG 10774 / NCTC 10582 / VPI-5482 / E50).